Here is a 350-residue protein sequence, read N- to C-terminus: Guanine nucleotide-binding protein G(t) subunit alpha (350 aa).

The tract at residues 1–21 is disordered; that stretch reads MGAGASAEEKHSRELEKKLKE. Gly2 carries N-myristoyl glycine lipidation. Basic and acidic residues predominate over residues 7–21; that stretch reads AEEKHSRELEKKLKE. Residues 28 to 350 form the G-alpha domain; that stretch reads RTVKLLLLGA…KENLKDCGLF (323 aa). The interval 31–44 is G1 motif; the sequence is KLLLLGAGESGKST. GTP is bound by residues 36-43, 171-177, 196-200, 265-268, and Ala322; these read GAGESGKS, LRSRVKT, DVGGQ, and NKKD. Residues Ser43 and Thr177 each coordinate Mg(2+). Residues 169 to 177 are G2 motif; it reads DVLRSRVKT. The segment at 192–201 is G3 motif; the sequence is FRMFDVGGQR. The segment at 261–268 is G4 motif; the sequence is VLFLNKKD. The interval 320–325 is G5 motif; sequence TCATDT.

It belongs to the G-alpha family. G(i/o/t/z) subfamily. As to quaternary structure, g proteins are composed of 3 units; alpha, beta and gamma. The alpha chain contains the guanine nucleotide binding site.

Functionally, guanine nucleotide-binding proteins (G proteins) are involved as modulators or transducers in various transmembrane signaling systems. Transducin is an amplifier and one of the transducers of a visual impulse that performs the coupling between rhodopsin and cGMP-phosphodiesterase. The sequence is that of Guanine nucleotide-binding protein G(t) subunit alpha (gnat) from Xenopus laevis (African clawed frog).